The primary structure comprises 321 residues: ATP-dependent 6-phosphofructokinase (321 aa).

G12 provides a ligand contact to ATP. ADP contacts are provided by residues 22–26 and 55–60; these read RAVVR and RYSVSD. ATP contacts are provided by residues 73-74 and 103-106; these read RF and GDGS. D104 contacts Mg(2+). Substrate is bound at residue 127–129; that stretch reads TID. Residue D129 is the Proton acceptor of the active site. R156 serves as a coordination point for ADP. Residues R164 and 171–173 contribute to the substrate site; that span reads MGR. Residues 187-189 and 215-217 each bind ADP; these read GCE and KRH. Substrate-binding positions include E224, R245, and 251–254; that span reads HVQR.

Belongs to the phosphofructokinase type A (PFKA) family. ATP-dependent PFK group I subfamily. Prokaryotic clade 'B1' sub-subfamily. In terms of assembly, homotetramer. Mg(2+) serves as cofactor.

Its subcellular location is the cytoplasm. The catalysed reaction is beta-D-fructose 6-phosphate + ATP = beta-D-fructose 1,6-bisphosphate + ADP + H(+). It functions in the pathway carbohydrate degradation; glycolysis; D-glyceraldehyde 3-phosphate and glycerone phosphate from D-glucose: step 3/4. Allosterically activated by ADP and other diphosphonucleosides, and allosterically inhibited by phosphoenolpyruvate. Catalyzes the phosphorylation of D-fructose 6-phosphate to fructose 1,6-bisphosphate by ATP, the first committing step of glycolysis. The protein is ATP-dependent 6-phosphofructokinase of Actinobacillus succinogenes (strain ATCC 55618 / DSM 22257 / CCUG 43843 / 130Z).